Reading from the N-terminus, the 396-residue chain is Inhibitory POU protein (396 aa).

Positions 86 to 95 (RAEALAAVDI) match the POU-IV box motif. A POU-specific domain is found at 222-299 (DTDTDPRELE…ILQAWLEEAE (78 aa)). Positions 302-328 (AKNKRRDPDAPSVLPAGEKKRKRTSIA) are disordered. The segment at residues 320–377 (KKRKRTSIAAPEKRSLEAYFAVQPRPSGEKIAAIAEKLDLKKNVVRVWFCNQRQKQKR) is a DNA-binding region (homeobox; atypical).

Belongs to the POU transcription factor family. Class-4 subfamily. Coexpressed with vvl in overlapping subsets of neurons in the embryonic central nervous system. Expressed in olfactory neurons.

It is found in the nucleus. Functionally, modulates gene transcription; simultaneously generates both a specific activator and an inhibitor of gene transcription, capable of modulating two distinct regulatory programs during neural development. Has a role in olfactory behavior. In Drosophila melanogaster (Fruit fly), this protein is Inhibitory POU protein (acj6).